Here is a 192-residue protein sequence, read N- to C-terminus: Peptide deformylase (192 aa).

Positions 102 and 145 each coordinate Fe cation. Glu-146 is a catalytic residue. His-149 provides a ligand contact to Fe cation.

This sequence belongs to the polypeptide deformylase family. Fe(2+) is required as a cofactor.

It carries out the reaction N-terminal N-formyl-L-methionyl-[peptide] + H2O = N-terminal L-methionyl-[peptide] + formate. Functionally, removes the formyl group from the N-terminal Met of newly synthesized proteins. Requires at least a dipeptide for an efficient rate of reaction. N-terminal L-methionine is a prerequisite for activity but the enzyme has broad specificity at other positions. The sequence is that of Peptide deformylase from Thermus thermophilus (strain ATCC BAA-163 / DSM 7039 / HB27).